A 508-amino-acid polypeptide reads, in one-letter code: Light-independent protochlorophyllide reductase subunit B (508 aa).

Asp-36 is a [4Fe-4S] cluster binding site. Asp-294 serves as the catalytic Proton donor. 429–430 contacts substrate; the sequence is GM.

It belongs to the ChlB/BchB/BchZ family. As to quaternary structure, protochlorophyllide reductase is composed of three subunits; ChlL, ChlN and ChlB. Forms a heterotetramer of two ChlB and two ChlN subunits. [4Fe-4S] cluster is required as a cofactor.

It catalyses the reaction chlorophyllide a + oxidized 2[4Fe-4S]-[ferredoxin] + 2 ADP + 2 phosphate = protochlorophyllide a + reduced 2[4Fe-4S]-[ferredoxin] + 2 ATP + 2 H2O. It participates in porphyrin-containing compound metabolism; chlorophyll biosynthesis (light-independent). Component of the dark-operative protochlorophyllide reductase (DPOR) that uses Mg-ATP and reduced ferredoxin to reduce ring D of protochlorophyllide (Pchlide) to form chlorophyllide a (Chlide). This reaction is light-independent. The NB-protein (ChlN-ChlB) is the catalytic component of the complex. The polypeptide is Light-independent protochlorophyllide reductase subunit B (Trichormus variabilis (strain ATCC 29413 / PCC 7937) (Anabaena variabilis)).